Here is a 351-residue protein sequence, read N- to C-terminus: Alternative oxidase, mitochondrial (351 aa).

Residues Leu-147–Leu-167 form a helical membrane-spanning segment. Glu-154, Glu-193, and His-196 together coordinate Fe cation. Residues Leu-212–Ser-232 traverse the membrane as a helical segment. Residues Glu-244, Glu-245, Glu-299, and His-302 each coordinate Fe cation. A disordered region spans residues Ala-322–Ile-351.

The protein belongs to the alternative oxidase family. It depends on Fe cation as a cofactor.

The protein resides in the mitochondrion inner membrane. In terms of biological role, catalyzes cyanide-resistant oxygen consumption. May increase respiration when the cytochrome respiratory pathway is restricted, or in response to low temperatures. This is Alternative oxidase, mitochondrial (aox1) from Aspergillus niger.